The primary structure comprises 412 residues: Fringe glycosyltransferase (412 aa).

The Cytoplasmic segment spans residues 1 to 15; sequence MMSLTVLSPPQRFKR. Residues 16–34 traverse the membrane as a helical; Signal-anchor for type II membrane protein segment; the sequence is ILQAMMLAVAVVYMTLLLY. The Lumenal segment spans residues 35-412; the sequence is QSAYGYPGIQ…FPYFSFCPPR (378 aa). Arg164 serves as a coordination point for substrate. Disulfide bonds link Cys204-Cys215 and Cys233-Cys297. Position 237 (Asp237) interacts with substrate. Asp238 contacts Mn(2+). Asp327 is a catalytic residue. His351 is a Mn(2+) binding site. Cys400 and Cys409 are disulfide-bonded.

It belongs to the glycosyltransferase 31 family. Requires Mn(2+) as cofactor. Expressed in dorsal cells.

The protein resides in the golgi apparatus membrane. It catalyses the reaction 3-O-(alpha-L-fucosyl)-L-threonyl-[EGF-like domain protein] + UDP-N-acetyl-alpha-D-glucosamine = 3-O-(N-acetyl-beta-D-glucosaminyl-(1-&gt;3)-alpha-L-fucosyl)-L-threonyl-[EGF-like domain protein] + UDP + H(+). The catalysed reaction is 3-O-(alpha-L-fucosyl)-L-seryl-[EGF-like domain protein] + UDP-N-acetyl-alpha-D-glucosamine = 3-O-(N-acetyl-beta-D-glucosaminyl-(1-&gt;3)-alpha-L-fucosyl)-L-seryl-[EGF-like domain protein] + UDP + H(+). Functionally, glycosyltransferase involved in the elongation of O-linked ligands to activate Notch signaling. Possesses fucose-specific beta-1,3-N-acetylglucosaminyltransferase activity; extends the O-linked fucose on the Notch EGF repeats. Boundary-specific cell-signaling molecule that is responsible for dorsal-ventral cell interactions during wing development. The polypeptide is Fringe glycosyltransferase (fng) (Drosophila melanogaster (Fruit fly)).